Consider the following 189-residue polypeptide: uncharacterized protein (189 aa).

Helical transmembrane passes span 4-21 (AIST…FLFR), 34-56 (AFYP…PLIL), 79-101 (LLVI…LIYS), 122-144 (RILS…VLLN), and 148-170 (ILHV…NLLV).

Its subcellular location is the cell membrane. This is an uncharacterized protein from Archaeoglobus fulgidus (strain ATCC 49558 / DSM 4304 / JCM 9628 / NBRC 100126 / VC-16).